The primary structure comprises 866 residues: Protein mono-ADP-ribosyltransferase PARP9 (866 aa).

Position 42 is a phosphoserine (serine 42). Macro domains follow at residues glutamine 109–leucine 298 and alanine 313–serine 492. Residues threonine 635–serine 853 form the PARP catalytic domain.

It belongs to the ARTD/PARP family. In terms of assembly, forms a stable complex with E3 ligase DTX3L; the interaction is required for PARP9 mediated ADP-ribosylation of ubiquitin. Interacts (via PARP catalytic domain) with DTX3L (via N-terminus). Forms a complex with STAT1 and DTX3L independently of IFNB1 or IFNG-mediated STAT1 'Tyr-701' phosphorylation. Forms a complex with STAT1, DTX3L and histone H2B H2BC9/H2BJ; the interaction is likely to induce H2BC9/H2BJ ubiquitination. Interacts (via N-terminus) with STAT1. Interacts with PARP14 in IFNG-stimulated macrophages; the interaction prevents PARP14-mediated STAT1 and STAT6 ADP-riboslylation. Interacts with PARP1 (when poly-ADP-ribosylated). ADP-ribosylated by PARP14. Highly expressed in the thymus and intestine. Expressed in macrophages.

It is found in the cytoplasm. The protein resides in the cytosol. The protein localises to the nucleus. It catalyses the reaction [protein]-C-terminal glycine + NAD(+) = [protein]-C-terminal O-(ADP-D-ribosyl)-glycine + nicotinamide. Its activity is regulated as follows. Binding to poly(ADP-ribose) does not affect its activity. Functionally, ADP-ribosyltransferase which, in association with E3 ligase DTX3L, plays a role in DNA damage repair and in immune responses including interferon-mediated antiviral defenses. Within the complex, enhances DTX3L E3 ligase activity which is further enhanced by PARP9 binding to poly(ADP-ribose). In addition, positively regulates DTXL3 protein levels. In association with DTX3L and in presence of E1 and E2 enzymes, mediates NAD(+)-dependent mono-ADP-ribosylation of ubiquitin which prevents ubiquitin conjugation to substrates such as histones. During DNA repair, PARP1 recruits PARP9/BAL1-DTX3L complex to DNA damage sites via PARP9 binding to ribosylated PARP1. Subsequent PARP1-dependent PARP9/BAL1-DTX3L-mediated ubiquitination promotes the rapid and specific recruitment of 53BP1/TP53BP1, UIMC1/RAP80, and BRCA1 to DNA damage sites. In response to DNA damage, PARP9-DTX3L complex is required for efficient non-homologous end joining (NHEJ) but the complex function is restrained by PARP9 activity. Dispensable for B-cell receptor (BCR) assembly through V(D)J recombination and class switch recombination (CSR). In macrophages, positively regulates pro-inflammatory cytokines production in response to IFNG stimulation by suppressing PARP14-mediated STAT1 ADP-ribosylation and thus promoting STAT1 phosphorylation. Also suppresses PARP14-mediated STAT6 ADP-ribosylation. The chain is Protein mono-ADP-ribosyltransferase PARP9 (Parp9) from Mus musculus (Mouse).